The primary structure comprises 198 residues: Glycerol-3-phosphate acyltransferase (198 aa).

5 helical membrane passes run 2–22 (YAVL…AYIF), 48–70 (LGYK…AVLI), 75–97 (MGNT…PVFL), 111–131 (VVMT…VTVI), and 154–174 (IFWN…LAIF).

The protein belongs to the PlsY family. In terms of assembly, probably interacts with PlsX.

The protein resides in the cell membrane. The enzyme catalyses an acyl phosphate + sn-glycerol 3-phosphate = a 1-acyl-sn-glycero-3-phosphate + phosphate. It participates in lipid metabolism; phospholipid metabolism. In terms of biological role, catalyzes the transfer of an acyl group from acyl-phosphate (acyl-PO(4)) to glycerol-3-phosphate (G3P) to form lysophosphatidic acid (LPA). This enzyme utilizes acyl-phosphate as fatty acyl donor, but not acyl-CoA or acyl-ACP. This chain is Glycerol-3-phosphate acyltransferase, found in Thermoanaerobacter sp. (strain X514).